Here is a 43-residue protein sequence, read N- to C-terminus: METATLVTIFLSGLLVSFTGYALYTAFGQPSQQLRDPFEEHGD.

A helical transmembrane segment spans residues 7–29 (VTIFLSGLLVSFTGYALYTAFGQ).

Belongs to the PsbN family.

Its subcellular location is the plastid. The protein localises to the chloroplast thylakoid membrane. Its function is as follows. May play a role in photosystem I and II biogenesis. The chain is Protein PsbN from Ipomoea purpurea (Common morning glory).